We begin with the raw amino-acid sequence, 101 residues long: RNA-binding protein Hfq (101 aa).

The Sm domain maps to 9 to 68 (DPFLNALRRERVPVSIYLVNGIKLQGQIESFDQFVILLKNTVSQMVYKHAISTVVPSRPV). The tract at residues 63–101 (VPSRPVSHHNNNPSGGSSNYHHGSTPASQPSQPESDDAE) is disordered. The span at 70 to 86 (HHNNNPSGGSSNYHHGS) shows a compositional bias: low complexity.

This sequence belongs to the Hfq family. Homohexamer.

Its function is as follows. RNA chaperone that binds small regulatory RNA (sRNAs) and mRNAs to facilitate mRNA translational regulation in response to envelope stress, environmental stress and changes in metabolite concentrations. Also binds with high specificity to tRNAs. The chain is RNA-binding protein Hfq from Sodalis glossinidius (strain morsitans).